A 147-amino-acid chain; its full sequence is Globin (147 aa).

Residues Ser-2 to Gln-147 form the Globin domain. His-64 and His-95 together coordinate heme b.

The protein belongs to the globin family. As to quaternary structure, homodimer or homooligomer.

This is Globin from Aequiyoldia eightsii (Antarctic yoldia).